The chain runs to 192 residues: Transcription antitermination protein NusB (192 aa).

It belongs to the NusB family.

Its function is as follows. Involved in transcription antitermination. Required for transcription of ribosomal RNA (rRNA) genes. Binds specifically to the boxA antiterminator sequence of the ribosomal RNA (rrn) operons. This is Transcription antitermination protein NusB from Lactococcus lactis subsp. lactis (strain IL1403) (Streptococcus lactis).